A 229-amino-acid chain; its full sequence is Large ribosomal subunit protein uL1 (229 aa).

This sequence belongs to the universal ribosomal protein uL1 family. In terms of assembly, part of the 50S ribosomal subunit.

Its function is as follows. Binds directly to 23S rRNA. The L1 stalk is quite mobile in the ribosome, and is involved in E site tRNA release. Protein L1 is also a translational repressor protein, it controls the translation of the L11 operon by binding to its mRNA. The protein is Large ribosomal subunit protein uL1 of Phenylobacterium zucineum (strain HLK1).